The chain runs to 227 residues: PKHD-type hydroxylase Bamb_4479 (227 aa).

One can recognise a Fe2OG dioxygenase domain in the interval 80-179 (QVYPPLFNRY…RVASFFWVQS (100 aa)). Fe cation contacts are provided by His-98, Asp-100, and His-160. Arg-170 contacts 2-oxoglutarate.

Fe(2+) is required as a cofactor. L-ascorbate serves as cofactor.

The protein is PKHD-type hydroxylase Bamb_4479 of Burkholderia ambifaria (strain ATCC BAA-244 / DSM 16087 / CCUG 44356 / LMG 19182 / AMMD) (Burkholderia cepacia (strain AMMD)).